Consider the following 62-residue polypeptide: Photosystem II reaction center protein Z (62 aa).

2 consecutive transmembrane segments (helical) span residues 8-28 (ALFALIATSFLLVVGVPVAFA) and 41-61 (FSGASLWIGLVFLVGIPNSFI).

It belongs to the PsbZ family. In terms of assembly, PSII is composed of 1 copy each of membrane proteins PsbA, PsbB, PsbC, PsbD, PsbE, PsbF, PsbH, PsbI, PsbJ, PsbK, PsbL, PsbM, PsbT, PsbY, PsbZ, Psb30/Ycf12, at least 3 peripheral proteins of the oxygen-evolving complex and a large number of cofactors. It forms dimeric complexes.

The protein resides in the plastid. Its subcellular location is the chloroplast thylakoid membrane. In terms of biological role, may control the interaction of photosystem II (PSII) cores with the light-harvesting antenna, regulates electron flow through the 2 photosystem reaction centers. PSII is a light-driven water plastoquinone oxidoreductase, using light energy to abstract electrons from H(2)O, generating a proton gradient subsequently used for ATP formation. In Adiantum capillus-veneris (Maidenhair fern), this protein is Photosystem II reaction center protein Z.